Here is a 429-residue protein sequence, read N- to C-terminus: Glutamate-1-semialdehyde 2,1-aminomutase 2 (429 aa).

The residue at position 268 (Lys268) is an N6-(pyridoxal phosphate)lysine.

This sequence belongs to the class-III pyridoxal-phosphate-dependent aminotransferase family. HemL subfamily. As to quaternary structure, homodimer. Pyridoxal 5'-phosphate is required as a cofactor.

Its subcellular location is the cytoplasm. It catalyses the reaction (S)-4-amino-5-oxopentanoate = 5-aminolevulinate. It participates in porphyrin-containing compound metabolism; protoporphyrin-IX biosynthesis; 5-aminolevulinate from L-glutamyl-tRNA(Glu): step 2/2. This is Glutamate-1-semialdehyde 2,1-aminomutase 2 from Bacillus thuringiensis (strain Al Hakam).